Reading from the N-terminus, the 497-residue chain is Bifunctional protein GlmU (497 aa).

Residues 1–252 (MSQPSARPSA…VWEVEGANDR (252 aa)) form a pyrophosphorylase region. UDP-N-acetyl-alpha-D-glucosamine is bound by residues 14–17 (LAAG), lysine 28, glutamine 86, 91–92 (GT), 115–117 (YGD), glycine 154, glutamate 169, asparagine 192, and asparagine 250. Aspartate 117 provides a ligand contact to Mg(2+). Residue asparagine 250 coordinates Mg(2+). The interval 253-273 (RQLSDLGRRLNERVLRHWMKE) is linker. The segment at 274 to 497 (GVTVVDPSST…AGAEGSGAQG (224 aa)) is N-acetyltransferase. UDP-N-acetyl-alpha-D-glucosamine contacts are provided by arginine 355 and lysine 373. The Proton acceptor role is filled by histidine 385. 2 residues coordinate UDP-N-acetyl-alpha-D-glucosamine: tyrosine 388 and asparagine 399. Residues 408-409 (NY), serine 427, and alanine 445 contribute to the acetyl-CoA site. Residues 473–497 (PAKRPGTSSAEAARAAGAEGSGAQG) form a disordered region. The segment covering 480–490 (SSAEAARAAGA) has biased composition (low complexity).

It in the N-terminal section; belongs to the N-acetylglucosamine-1-phosphate uridyltransferase family. The protein in the C-terminal section; belongs to the transferase hexapeptide repeat family. Homotrimer. Mg(2+) is required as a cofactor.

It localises to the cytoplasm. It carries out the reaction alpha-D-glucosamine 1-phosphate + acetyl-CoA = N-acetyl-alpha-D-glucosamine 1-phosphate + CoA + H(+). The enzyme catalyses N-acetyl-alpha-D-glucosamine 1-phosphate + UTP + H(+) = UDP-N-acetyl-alpha-D-glucosamine + diphosphate. It participates in nucleotide-sugar biosynthesis; UDP-N-acetyl-alpha-D-glucosamine biosynthesis; N-acetyl-alpha-D-glucosamine 1-phosphate from alpha-D-glucosamine 6-phosphate (route II): step 2/2. The protein operates within nucleotide-sugar biosynthesis; UDP-N-acetyl-alpha-D-glucosamine biosynthesis; UDP-N-acetyl-alpha-D-glucosamine from N-acetyl-alpha-D-glucosamine 1-phosphate: step 1/1. Its pathway is bacterial outer membrane biogenesis; LPS lipid A biosynthesis. In terms of biological role, catalyzes the last two sequential reactions in the de novo biosynthetic pathway for UDP-N-acetylglucosamine (UDP-GlcNAc). The C-terminal domain catalyzes the transfer of acetyl group from acetyl coenzyme A to glucosamine-1-phosphate (GlcN-1-P) to produce N-acetylglucosamine-1-phosphate (GlcNAc-1-P), which is converted into UDP-GlcNAc by the transfer of uridine 5-monophosphate (from uridine 5-triphosphate), a reaction catalyzed by the N-terminal domain. The sequence is that of Bifunctional protein GlmU from Micrococcus luteus (strain ATCC 4698 / DSM 20030 / JCM 1464 / CCM 169 / CCUG 5858 / IAM 1056 / NBRC 3333 / NCIMB 9278 / NCTC 2665 / VKM Ac-2230) (Micrococcus lysodeikticus).